A 353-amino-acid chain; its full sequence is Guanine nucleotide-binding protein subunit beta-5 (353 aa).

WD repeat units follow at residues 61 to 100 (GHGNKVLCMDWCKDKRRIVSSSQDGKVIVWDSFTTNKEHA), 103 to 142 (MPCTWVMACAYAPSGCAIACGGLDNKCSVYPLTFDKNENM), 151 to 192 (MHTN…QSFH), 194 to 236 (HGAD…QAFE), 237 to 276 (THESDVNSVRYYPSGDAFASGSDDATCRLYDLRADREVAI), 278 to 320 (SKES…RVSI), and 323 to 352 (GHENRVSTLRVSPDGTAFCSGSWDHTLRVW).

Belongs to the WD repeat G protein beta family. Component of a complex composed of RGS9 (isoform RGS9-1), GNB5 and RGS9BP; within this complex, the presence of GNB5 stabilizes both itself and RGS9 and increases RGS9 GTPase-activating protein (GAP) activity. Interacts with RGS7, forming the RGS7-GNB5 complex; within this complex, the presence of GNB5 increases RGS7 GTPase-activating protein (GAP) activity. Interacts with GPR158; promotes the GTPase activator activity of the RGS7-GNB5 complex in absence of glycine, in contrast GTPase activator activity of the RGS7-GNB5 complex is inhibited in presence of glycine. Interacts with RGS6. As to expression, detected in brain.

It is found in the membrane. Functionally, enhances GTPase-activating protein (GAP) activity of regulator of G protein signaling (RGS) proteins, such as RGS7 and RGS9, hence involved in the termination of the signaling initiated by the G protein coupled receptors (GPCRs) by accelerating the GTP hydrolysis on the G-alpha subunits, thereby promoting their inactivation. Increases RGS7 GTPase-activating protein (GAP) activity, thereby regulating mood and cognition. Increases RGS9 GTPase-activating protein (GAP) activity, hence contributes to the deactivation of G protein signaling initiated by D(2) dopamine receptors. May play an important role in neuronal signaling, including in the parasympathetic, but not sympathetic, control of heart rate. The protein is Guanine nucleotide-binding protein subunit beta-5 (Gnb5) of Rattus norvegicus (Rat).